A 493-amino-acid chain; its full sequence is Glycylpeptide N-tetradecanoyltransferase (493 aa).

Histidine 45–tryptophan 48 is a tetradecanoyl-CoA binding site. Residues valine 53–proline 73 form a disordered region. Residues leucine 182–valine 184 and serine 190–alanine 194 each bind tetradecanoyl-CoA. The active-site Proton acceptor; via carboxylate is leucine 493.

The protein belongs to the NMT family. As to quaternary structure, monomer.

Its subcellular location is the cytoplasm. It catalyses the reaction N-terminal glycyl-[protein] + tetradecanoyl-CoA = N-tetradecanoylglycyl-[protein] + CoA + H(+). Adds a myristoyl group to the N-terminal glycine residue of certain cellular proteins. The polypeptide is Glycylpeptide N-tetradecanoyltransferase (Cryptococcus neoformans var. neoformans serotype D (strain B-3501A) (Filobasidiella neoformans)).